The following is a 77-amino-acid chain: U8-lycotoxin-Ls1i (77 aa).

An N-terminal signal peptide occupies residues 1–20; the sequence is MKLIIFTGLVLFAIVSLIEV. A propeptide spanning residues 21-26 is cleaved from the precursor; it reads QADNER.

The protein belongs to the neurotoxin 19 (CSTX) family. 08 (U8-Lctx) subfamily. In terms of processing, contains 4 disulfide bonds. In terms of tissue distribution, expressed by the venom gland.

Its subcellular location is the secreted. The polypeptide is U8-lycotoxin-Ls1i (Lycosa singoriensis (Wolf spider)).